Reading from the N-terminus, the 57-residue chain is High light-inducible protein HliD (57 aa).

The short motif at 25–30 is the Chlorophyll-binding motif element; that stretch reads EKLNGR. The helical transmembrane segment at 25 to 46 threads the bilayer; the sequence is EKLNGRAAMVGFLLILVIEYFT.

Belongs to the Hlip family. As to quaternary structure, probably forms dimers which bind 6 chlorophyll a and 2 beta-carotenoid molecules. Cofractionates in an approximately 50 kDa fraction of the thylakoid membrane with HliC. Does not associate with mature PSII. Purified in several chlorophyll- and carotenoid-containing complexes, including photosystem II (PSII) assembly intermediate complex RCII* (iD1, D1, D2, PsbE, PsbF, PsbI, Ycf39, Ycf48, HliC and HliD) and the Ycf39-Hlip complex (Ycf39, HliC, HliD and pigments).

The protein resides in the cellular thylakoid membrane. Functionally, involved in photosystem II (PSII) assembly and/or repair under high light stress. Required for binding of chlorophyll and carotenoids by the Ycf39-Hlip complex. The Ycf39-Hlip complex binds D1 at an early stage of PSII assembly along with Ycf48, ribosomes and ChlG, the last enzyme in chlorophyll biosynthesis; it may be involved in chlorophyll reuse and delivery to D1 in the initial stages of PSII assembly. Binds chlorophyll a and beta-carotenoid in a 3:1 stoichiometry in the presence and absence of Yfc39; in the Ycf39-HliC-HliD complex, HliD binds all the pigment. The Ycf39-Hlip complex efficiently quenches chlorophyll fluorescence, contributing to photoprotection. Deletion of 4 to 5 members of the Hlip family suggests the proteins are involved in regulation of chlorophyll biosynthesis, in stabilization of chlorophyll-binding proteins and/or in reuse of chlorophylls, and may regulate tetrapyrrole biosynthesis. Might bind chlorophyll and/or carotenoids in association with HliC (called the ScpBE pair). The Hlips might regulate tetrapyrrole biosynthesis, maybe at the level of aminolevulinic acid synthesis and probably stabilize PSII assembly intermediates. The polypeptide is High light-inducible protein HliD (hliD) (Synechocystis sp. (strain ATCC 27184 / PCC 6803 / Kazusa)).